A 477-amino-acid chain; its full sequence is UDP-N-acetylmuramate--L-alanine ligase (477 aa).

122-128 provides a ligand contact to ATP; the sequence is GTHGKTT.

It belongs to the MurCDEF family.

The protein resides in the cytoplasm. The enzyme catalyses UDP-N-acetyl-alpha-D-muramate + L-alanine + ATP = UDP-N-acetyl-alpha-D-muramoyl-L-alanine + ADP + phosphate + H(+). It functions in the pathway cell wall biogenesis; peptidoglycan biosynthesis. Cell wall formation. This is UDP-N-acetylmuramate--L-alanine ligase from Xylella fastidiosa (strain M12).